Reading from the N-terminus, the 1142-residue chain is GPI inositol-deacylase (1142 aa).

A disordered region spans residues 24 to 59; it reads GFYKRNNANTASNDEKPNLEQNDIPSVTSSGSSTPS. Residues 47 to 59 show a composition bias toward low complexity; that stretch reads IPSVTSSGSSTPS. The chain crosses the membrane as a helical span at residues 81 to 101; that stretch reads SWSLYVAIIAILLLLVILHSF. The active site involves Ser264. Asn596 and Asn679 each carry an N-linked (GlcNAc...) asparagine glycan. The next 4 helical transmembrane spans lie at 741–761, 781–801, 849–869, and 946–966; these read LLAS…FRYF, GLIK…YLIS, LLTL…LCVM, and IIGI…QLVY. Asn1002 carries an N-linked (GlcNAc...) asparagine glycan. The chain crosses the membrane as a helical span at residues 1006-1026; it reads TITILMLLLAPLDFPVLIVWA. A glycan (N-linked (GlcNAc...) asparagine) is linked at Asn1028. The next 3 membrane-spanning stretches (helical) occupy residues 1035-1055, 1075-1095, and 1097-1117; these read IPFP…LTEI, VFLF…PYLI, and NVVG…GFFV. The N-linked (GlcNAc...) asparagine glycan is linked to Asn1119.

Belongs to the GPI inositol-deacylase family.

It is found in the endoplasmic reticulum membrane. In terms of biological role, involved in inositol deacylation of GPI-anchored proteins which plays important roles in the quality control and ER-associated degradation of GPI-anchored proteins. This is GPI inositol-deacylase (bst1) from Schizosaccharomyces pombe (strain 972 / ATCC 24843) (Fission yeast).